The following is a 518-amino-acid chain: GMP synthase [glutamine-hydrolyzing] (518 aa).

Residues 13-203 (KIIVLDFGSQ…ALNVCGCKGD (191 aa)) form the Glutamine amidotransferase type-1 domain. Cys-90 (nucleophile) is an active-site residue. Residues His-177 and Glu-179 contribute to the active site. The GMPS ATP-PPase domain maps to 204–393 (WTMENFSEVE…LGMPDAIVWR (190 aa)). Residue 231–237 (SGGVDSS) coordinates ATP.

Homodimer.

The enzyme catalyses XMP + L-glutamine + ATP + H2O = GMP + L-glutamate + AMP + diphosphate + 2 H(+). Its pathway is purine metabolism; GMP biosynthesis; GMP from XMP (L-Gln route): step 1/1. Functionally, catalyzes the synthesis of GMP from XMP. This chain is GMP synthase [glutamine-hydrolyzing], found in Listeria monocytogenes serovar 1/2a (strain ATCC BAA-679 / EGD-e).